The following is a 339-amino-acid chain: Olfactory receptor 7E24 (339 aa).

Residues 1–43 are Extracellular-facing; the sequence is MSYFPILFFFFLKRCPSYTEPQNLTGVSEFLLLGLSEDPELQP. N-linked (GlcNAc...) asparagine glycosylation is present at Asn23. A helical membrane pass occupies residues 44 to 64; that stretch reads VLAGLFLSMYLVTVLGNLLII. Topologically, residues 65–72 are cytoplasmic; the sequence is LAVSSDSH. The chain crosses the membrane as a helical span at residues 73–93; the sequence is LHTPMYFFLSNLSLADIGFTS. Residues 94–117 are Extracellular-facing; that stretch reads TTVPKMIVDMQTHSRVISYEGCLT. An intrachain disulfide couples Cys115 to Cys207. Residues 118 to 138 form a helical membrane-spanning segment; sequence QMSFFVLFACMDDMLLSVMAY. Residues 139–157 lie on the Cytoplasmic side of the membrane; sequence DRFVAICHPLHYRIIMNPR. The helical transmembrane segment at 158–178 threads the bilayer; sequence LCGFLILLSFFISLLDSQLHN. Topologically, residues 179–215 are extracellular; it reads LIMLQLTCFKDVDISNFFCDPSQLLHLRCSDTFINEM. The chain crosses the membrane as a helical span at residues 216–235; it reads VIYFMGAIFGCLPISGILFS. Over 236-255 the chain is Cytoplasmic; it reads YYKIVSPILRVPTSDGKYKA. The helical transmembrane segment at 256 to 276 threads the bilayer; the sequence is FSTCGSHLAVVCLFYGTGLVG. Residues 277–289 are Extracellular-facing; the sequence is YLSSAVLPSPRKS. Residues 290–310 traverse the membrane as a helical segment; that stretch reads MVASVMYTVVTPMLNPFIYSL. The Cytoplasmic portion of the chain corresponds to 311 to 339; it reads RNKDIQSALCRLHGRIIKSHHLHPFCYMG.

Belongs to the G-protein coupled receptor 1 family.

The protein resides in the cell membrane. Odorant receptor. This is Olfactory receptor 7E24 (OR7E24) from Homo sapiens (Human).